The primary structure comprises 273 residues: DNA replication complex GINS protein psf2 (273 aa).

Disordered regions lie at residues 88–110 (KEDP…SQPG) and 240–273 (ASAE…DMGL). Basic and acidic residues predominate over residues 244 to 257 (ATRREEEEEARRGG). Acidic residues predominate over residues 261 to 273 (GDGDEDSDEDMGL).

This sequence belongs to the GINS2/PSF2 family. Component of the GINS complex which is a heterotetramer of div-26/sld5, drc-1/psf1, drc-2/psf2 and drc-3/psf3.

The protein resides in the nucleus. Functionally, the GINS complex plays an essential role in the initiation of DNA replication. Has a role in chromosome segregation. This chain is DNA replication complex GINS protein psf2 (drc-2), found in Neurospora crassa (strain ATCC 24698 / 74-OR23-1A / CBS 708.71 / DSM 1257 / FGSC 987).